A 430-amino-acid chain; its full sequence is Aspartate aminotransferase, mitochondrial (430 aa).

The transit peptide at 1-28 directs the protein to the mitochondrion; the sequence is MALAMMIRNAASKRGMTPISGHFGGLRS. L-aspartate-binding residues include Gly65, Trp160, and Asn213. Lys277 is modified (N6-(pyridoxal phosphate)lysine). Arg405 is an L-aspartate binding site.

It belongs to the class-I pyridoxal-phosphate-dependent aminotransferase family. As to quaternary structure, homodimer. Pyridoxal 5'-phosphate serves as cofactor.

The protein resides in the mitochondrion matrix. It catalyses the reaction L-aspartate + 2-oxoglutarate = oxaloacetate + L-glutamate. Its function is as follows. Amino acid aminotransferase important for the metabolism of amino acids and Krebs-cycle related organic acids. No activity with D-Asp or D-Ala as amino donors. In plants, it is involved in nitrogen metabolism and in aspects of carbon and energy metabolism. This Arabidopsis thaliana (Mouse-ear cress) protein is Aspartate aminotransferase, mitochondrial (ASP1).